The following is a 152-amino-acid chain: Natriuretic peptides A (152 aa).

The signal sequence occupies residues 1–24; that stretch reads MGSFSITKGFFLFLAFWLPGHIGA. 2 consecutive propeptides follow at residues 25–122 and 92–102; these read NPVY…AGPR and DGGALGRGPWD. Positions 54–104 are disordered; the sequence is DEVMPPQALSEQTDEAGAALSSLSEVPPWTGEVNPSQRDGGALGRGPWDPS. At Ser-128 the chain carries Phosphoserine. Cysteines 129 and 145 form a disulfide. The tract at residues 146-150 is important for degradation of atrial natriuretic peptide by IDE; that stretch reads NSFRY.

Belongs to the natriuretic peptide family. In terms of assembly, homodimer; disulfide-linked antiparallel dimer. In terms of processing, the precursor molecule is proteolytically cleaved by CORIN at Arg-122 to produce the atrial natriuretic peptide. Undergoes further proteolytic cleavage by unknown proteases to give rise to long-acting natriuretic peptide, vessel dilator and kaliuretic peptide. Additional processing gives rise to the auriculin and atriopeptin peptides. In the kidneys, alternative processing by an unknown protease results in the peptide urodilatin. Post-translationally, cleavage by MME initiates degradation of the factor and thereby regulates its activity. Degradation by IDE results in reduced activation of NPR1 (in vitro). During IDE degradation, the resulting products can temporarily stimulate NPR2 to produce cGMP, before the fragments are completely degraded and inactivated by IDE (in vitro). Degraded by IDE. In terms of processing, phosphorylation on Ser-128 decreases vasorelaxant activity. In terms of tissue distribution, high levels of expression in the atria compared to the ventricles. Very low levels of expression detected in extracardiac tissues such as the brain, hypothalamus, pituitary, lung and aorta. Atria (at protein level). As to expression, high levels of expression in the atria with very low levels of expression in the ventricles (at protein level). Relatively low levels of expression detected in the brain compared to the atria (at protein level).

It is found in the secreted. The protein resides in the perikaryon. The protein localises to the cell projection. Its function is as follows. Hormone that plays a key role in mediating cardio-renal homeostasis, and is involved in vascular remodeling and regulating energy metabolism. Acts by specifically binding and stimulating NPR1 to produce cGMP, which in turn activates effector proteins, such as PRKG1, that drive various biological responses. Regulates vasodilation, natriuresis, diuresis and aldosterone synthesis and is therefore essential for regulating blood pressure, controlling the extracellular fluid volume and maintaining the fluid-electrolyte balance. Also involved in inhibiting cardiac remodeling and cardiac hypertrophy by inducing cardiomyocyte apoptosis and attenuating the growth of cardiomyocytes and fibroblasts. Plays a role in female pregnancy by promoting trophoblast invasion and spiral artery remodeling in uterus, and thus prevents pregnancy-induced hypertension. In adipose tissue, acts in various cGMP- and PKG-dependent pathways to regulate lipid metabolism and energy homeostasis. This includes up-regulating lipid metabolism and mitochondrial oxygen utilization by activating the AMP-activated protein kinase (AMPK), and increasing energy expenditure by acting via MAPK11 to promote the UCP1-dependent thermogenesis of brown adipose tissue. Binds the clearance receptor NPR3 which removes the hormone from circulation. In terms of biological role, may have a role in cardio-renal homeostasis through regulation of natriuresis, diuresis, vasodilation, and inhibiting aldosterone synthesis. In vitro, promotes the production of cGMP and induces vasodilation. May promote natriuresis, at least in part, by enhancing prostaglandin E2 synthesis resulting in the inhibition of renal Na+-K+-ATPase. However reports on the involvement of this peptide in mammal blood volume and blood pressure homeostasis are conflicting; according to a report, in vivo it is not sufficient to activate cGMP and does not inhibit collecting duct transport nor effect diuresis and natriuresis. Appears to bind to specific receptors that are distinct from the receptors bound by atrial natriuretic peptide and vessel dilator. Possibly enhances protein excretion in urine by decreasing proximal tubular protein reabsorption. May have a role in cardio-renal homeostasis through regulation of natriuresis, diuresis, and vasodilation. In vitro, promotes the production of cGMP and induces vasodilation. May promote natriuresis, at least in part, by enhancing prostaglandin E2 synthesis resulting in the inhibition of renal Na+-K+-ATPase. However reports on the involvement of this peptide in mammal blood volume and blood pressure homeostasis are conflicting; according to a report, in vivo it is not sufficient to activate cGMP and does not inhibit collecting duct transport nor effect diuresis and natriuresis. Appears to bind to specific receptors that are distinct from the receptors bound by the atrial natriuretic and long-acting natriuretic peptides. Possibly functions in protein excretion in urine by maintaining the integrity of the proximal tubules and enhancing protein excretion by decreasing proximal tubular protein reabsorption. Functionally, may have a role in cardio-renal homeostasis through regulation of diuresis and inhibiting aldosterone synthesis. In vitro, promotes the production of cGMP and induces vasodilation. May promote natriuresis, at least in part, by enhancing prostaglandin E2 synthesis resulting in the inhibition of renal Na+-K+-ATPase. May have a role in potassium excretion but not sodium excretion (natriuresis). Possibly enhances protein excretion in urine by decreasing proximal tubular protein reabsorption. Its function is as follows. Hormone produced in the kidneys that appears to be important for maintaining cardio-renal homeostasis. Mediates vasodilation, natriuresis and diuresis primarily in the renal system, in order to maintain the extracellular fluid volume and control the fluid-electrolyte balance. Specifically binds and stimulates cGMP production by renal transmembrane receptors, likely NPR1. Urodilatin not ANP, may be the natriuretic peptide responsible for the regulation of sodium and water homeostasis in the kidney. In terms of biological role, may have a role in cardio-renal homeostasis through regulation of natriuresis and vasodilation. In vivo promotes natriuresis and in vitro, vasodilates renal artery strips. May have a role in cardio-renal homeostasis through regulation of regulation of natriuresis and vasodilation. In vivo promotes natriuresis. In vitro, vasodilates intestinal smooth muscle but not smooth muscle strips. Functionally, may have a role in cardio-renal homeostasis through regulation of natriuresis and vasodilation. In vivo promotes natriuresis. In vitro, selectively vasodilates intestinal and vascular smooth muscle strips. Its function is as follows. May have a role in cardio-renal homeostasis through regulation of natriuresis and vasodilation. In vivo promotes natriuresis. In vitro, selectively vasodilates intestinal smooth muscle but not vascular smooth muscle strips. The sequence is that of Natriuretic peptides A (Nppa) from Rattus norvegicus (Rat).